Consider the following 315-residue polypeptide: Methionyl-tRNA formyltransferase (315 aa).

110–113 serves as a coordination point for (6S)-5,6,7,8-tetrahydrofolate; that stretch reads SLLP.

The protein belongs to the Fmt family.

It catalyses the reaction L-methionyl-tRNA(fMet) + (6R)-10-formyltetrahydrofolate = N-formyl-L-methionyl-tRNA(fMet) + (6S)-5,6,7,8-tetrahydrofolate + H(+). In terms of biological role, attaches a formyl group to the free amino group of methionyl-tRNA(fMet). The formyl group appears to play a dual role in the initiator identity of N-formylmethionyl-tRNA by promoting its recognition by IF2 and preventing the misappropriation of this tRNA by the elongation apparatus. This Lactobacillus delbrueckii subsp. bulgaricus (strain ATCC BAA-365 / Lb-18) protein is Methionyl-tRNA formyltransferase.